A 463-amino-acid chain; its full sequence is Cytoplasmic tRNA 2-thiolation protein 2 (463 aa).

The protein belongs to the CTU2/NCS2 family.

The protein resides in the cytoplasm. The protein operates within tRNA modification; 5-methoxycarbonylmethyl-2-thiouridine-tRNA biosynthesis. Plays a central role in 2-thiolation of mcm(5)S(2)U at tRNA wobble positions of tRNA(Lys), tRNA(Glu) and tRNA(Gln). May act by forming a heterodimer with NCS6 that ligates sulfur from thiocarboxylated URM1 onto the uridine of tRNAs at wobble position. Prior mcm(5) tRNA modification by the elongator complex is required for 2-thiolation. May also be involved in protein urmylation. This is Cytoplasmic tRNA 2-thiolation protein 2 from Kluyveromyces lactis (strain ATCC 8585 / CBS 2359 / DSM 70799 / NBRC 1267 / NRRL Y-1140 / WM37) (Yeast).